Consider the following 172-residue polypeptide: Adenine phosphoribosyltransferase (172 aa).

This sequence belongs to the purine/pyrimidine phosphoribosyltransferase family. In terms of assembly, homodimer.

The protein localises to the cytoplasm. The enzyme catalyses AMP + diphosphate = 5-phospho-alpha-D-ribose 1-diphosphate + adenine. The protein operates within purine metabolism; AMP biosynthesis via salvage pathway; AMP from adenine: step 1/1. Its function is as follows. Catalyzes a salvage reaction resulting in the formation of AMP, that is energically less costly than de novo synthesis. This chain is Adenine phosphoribosyltransferase, found in Clostridium acetobutylicum (strain ATCC 824 / DSM 792 / JCM 1419 / IAM 19013 / LMG 5710 / NBRC 13948 / NRRL B-527 / VKM B-1787 / 2291 / W).